A 452-amino-acid chain; its full sequence is tRNA modification GTPase MnmE (452 aa).

(6S)-5-formyl-5,6,7,8-tetrahydrofolate contacts are provided by R23, E80, and K119. In terms of domain architecture, TrmE-type G spans 215-374; it reads GIWIALVGQP…LQQGLLEMIG (160 aa). N225 is a binding site for K(+). GTP-binding positions include 225-230, 244-250, and 269-272; these read NVGKSS, TEVPGTT, and DTAG. A Mg(2+)-binding site is contributed by S229. 3 residues coordinate K(+): T244, V246, and T249. T250 contacts Mg(2+). K452 serves as a coordination point for (6S)-5-formyl-5,6,7,8-tetrahydrofolate.

The protein belongs to the TRAFAC class TrmE-Era-EngA-EngB-Septin-like GTPase superfamily. TrmE GTPase family. As to quaternary structure, homodimer. Heterotetramer of two MnmE and two MnmG subunits. It depends on K(+) as a cofactor.

Its subcellular location is the cytoplasm. Functionally, exhibits a very high intrinsic GTPase hydrolysis rate. Involved in the addition of a carboxymethylaminomethyl (cmnm) group at the wobble position (U34) of certain tRNAs, forming tRNA-cmnm(5)s(2)U34. The sequence is that of tRNA modification GTPase MnmE from Nitrosospira multiformis (strain ATCC 25196 / NCIMB 11849 / C 71).